Here is a 123-residue protein sequence, read N- to C-terminus: Small ribosomal subunit protein uS8 (123 aa).

The protein belongs to the universal ribosomal protein uS8 family. In terms of assembly, part of the 30S ribosomal subunit. Contacts proteins S5 and S12.

One of the primary rRNA binding proteins, it binds directly to 16S rRNA central domain where it helps coordinate assembly of the platform of the 30S subunit. The polypeptide is Small ribosomal subunit protein uS8 (rpsH) (Carsonella ruddii (strain PV)).